The chain runs to 823 residues: Probable inorganic carbon transporter subunit DabA (823 aa).

Positions 361, 363, 527, and 542 each coordinate Zn(2+).

This sequence belongs to the inorganic carbon transporter (TC 9.A.2) DabA family. As to quaternary structure, forms a complex with DabB. The cofactor is Zn(2+).

Its subcellular location is the cell inner membrane. With respect to regulation, intracellular DIC accumulation is sensitive to CCCP (carbonyl cyanide-m-chlorophenylhydrazone) and DCCD (N,N-dicyclohexylcarbodiimide) and therefore likely driven by either proton potential, ATP, or both. Its function is as follows. Part of an energy-coupled inorganic carbon pump. Probably involved in transport of dissolved inorganic carbon (DIC) with upstream gene dabB (Tcr_0853); has been suggested to be a proton-DIC symporter. The protein is Probable inorganic carbon transporter subunit DabA of Hydrogenovibrio crunogenus (strain DSM 25203 / XCL-2) (Thiomicrospira crunogena).